Consider the following 2111-residue polypeptide: Mycocerosic acid synthase-like polyketide synthase (2111 aa).

The signal sequence occupies residues 1–15; the sequence is MTQNCVAPVAIIGMA. C16 is lipidated: N-palmitoyl cysteine. Residue C16 is the site of S-diacylglycerol cysteine attachment. Positions 16–428 constitute a Ketosynthase family 3 (KS3) domain; that stretch reads CRLPGAINSP…GTNVHAVLEQ (413 aa). The Acyl-thioester intermediate; for beta-ketoacyl synthase activity role is filled by C178. Residues H313 and H349 each act as for beta-ketoacyl synthase activity in the active site. The linker domain (LD) stretch occupies residues 430–537; that stretch reads PESPAETAAE…MPQQAVTNDD (108 aa). Positions 538 to 837 are acyltransferase (AT); the sequence is RGPVWVFSGQ…LAVFAAMRRQ (300 aa). S629 serves as the catalytic Acyl-ester intermediate; for acyltransferase activity. The tract at residues 896 to 1176 is dehydratase (DH); sequence PSVSVHPLLG…LSAMGLQLGT (281 aa). Positions 901–1025 are N-terminal hotdog fold; it reads HPLLGSHVVL…GDVDAERPAA (125 aa). Residues 901–1183 enclose the PKS/mFAS DH domain; sequence HPLLGSHVVL…LGTGNSDKAE (283 aa). H934 (proton acceptor; for dehydratase activity) is an active-site residue. Residues 1036 to 1183 are C-terminal hotdog fold; the sequence is PNRVDGDELR…LGTGNSDKAE (148 aa). D1100 functions as the Proton donor; for dehydratase activity in the catalytic mechanism. Positions 1215 to 1391 are pseudo beta-ketoacyl reductase (PsiKR); it reads SWLVILAGDD…SPEDETAWRD (177 aa). The enoylreductase (ER) stretch occupies residues 1419–1743; the sequence is EGMRLVVRNP…QHTGKLVIDI (325 aa). Residues 1765 to 2008 are beta-ketoacyl reductase (KR); the sequence is GAYVITGGLG…RSPFAELFLA (244 aa). NADP(+)-binding positions include 1773-1776, 1796-1799, 1824-1825, and 1902-1903; these read LGGL, SRSA, DI, and FS. Residues 2029-2104 enclose the Carrier domain; the sequence is EEWPTHLRRL…QRLCEMLDTD (76 aa). An O-(pantetheine 4'-phosphoryl)serine modification is found at S2064.

Homodimer.

The protein resides in the cell membrane. It participates in lipid metabolism; fatty acid biosynthesis. Functionally, polyketide synthase involved in the biosynthesis of 2,4-dimethyl-2-eicosenoic acid, a lipid component of the lipooligosaccharides (LOS) which are not located at the bacterial surface but rather in deeper compartments of the cell envelope of M.smegmatis. This chain is Mycocerosic acid synthase-like polyketide synthase, found in Mycolicibacterium smegmatis (strain ATCC 700084 / mc(2)155) (Mycobacterium smegmatis).